Here is a 527-residue protein sequence, read N- to C-terminus: Phosphoenolpyruvate carboxykinase (ATP) (527 aa).

Residues Arg-56, Tyr-192, and Lys-198 each coordinate substrate. ATP is bound by residues Lys-198, His-217, and Gly-233–Thr-241. The Mn(2+) site is built by Lys-198 and His-217. Position 254 (Asp-254) interacts with Mn(2+). ATP-binding residues include Glu-282, Arg-319, and Thr-444. Arg-319 contributes to the substrate binding site.

Belongs to the phosphoenolpyruvate carboxykinase (ATP) family. It depends on Mn(2+) as a cofactor.

The protein localises to the cytoplasm. It carries out the reaction oxaloacetate + ATP = phosphoenolpyruvate + ADP + CO2. The protein operates within carbohydrate biosynthesis; gluconeogenesis. Involved in the gluconeogenesis. Catalyzes the conversion of oxaloacetate (OAA) to phosphoenolpyruvate (PEP) through direct phosphoryl transfer between the nucleoside triphosphate and OAA. The protein is Phosphoenolpyruvate carboxykinase (ATP) of Bacillus subtilis (strain 168).